We begin with the raw amino-acid sequence, 99 residues long: uncharacterized protein (99 aa).

This is an uncharacterized protein from Methanocaldococcus jannaschii (strain ATCC 43067 / DSM 2661 / JAL-1 / JCM 10045 / NBRC 100440) (Methanococcus jannaschii).